Consider the following 194-residue polypeptide: Lytic chitin monooxygenase (194 aa).

Positions 1 to 28 (MKKSLLTIVLAFSFVLGGAALAPTVSEA) are cleaved as a signal peptide. Cu cation contacts are provided by His29 and His114. In terms of domain architecture, Chitin-binding type-4 spans 29–191 (HGYVASPGSR…VNAFYQAIDV (163 aa)).

Requires Cu(2+) as cofactor.

The protein resides in the secreted. The catalysed reaction is [(1-&gt;4)-N-acetyl-beta-D-glucosaminyl]n+m + reduced acceptor + O2 = [(1-&gt;4)-N-acetyl-beta-D-glucosaminyl]m-1-(1-&gt;4)-2-(acetylamino)-2-deoxy-D-glucono-1,5-lactone + [(1-&gt;4)-N-acetyl-beta-D-glucosaminyl]n + acceptor + H2O.. It participates in glycan degradation; chitin degradation. Involved in chitin degradation. Catalyzes the oxidative cleavage of glycosidic bonds in both alpha- and beta-chitin via a copper-dependent mechanism, leading to oxidized chitooligosaccharides with a dominance of even-numbered products. Acts synergistically with the chitinase EfChi18A, and combining the two enzymes leads to rapid and complete depolymerization of crystalline chitin, especially with beta-chitin as a substrate. Is likely involved in a chitin degradation pathway that allows E.faecalis V583 to grow on chitin as a carbon source. This Enterococcus faecalis (strain ATCC 700802 / V583) protein is Lytic chitin monooxygenase.